The following is a 531-amino-acid chain: O-phosphoserine--tRNA(Cys) ligase (531 aa).

Residues 189 to 191 (HMT), 234 to 236 (SAS), 276 to 277 (YY), and asparagine 319 contribute to the substrate site.

The protein belongs to the class-II aminoacyl-tRNA synthetase family. O-phosphoseryl-tRNA(Cys) synthetase subfamily. In terms of assembly, homotetramer. Interacts with SepCysS.

It carries out the reaction tRNA(Cys) + O-phospho-L-serine + ATP = O-phospho-L-seryl-tRNA(Cys) + AMP + diphosphate. Its function is as follows. Catalyzes the attachment of O-phosphoserine (Sep) to tRNA(Cys). The protein is O-phosphoserine--tRNA(Cys) ligase of Methanospirillum hungatei JF-1 (strain ATCC 27890 / DSM 864 / NBRC 100397 / JF-1).